The sequence spans 331 residues: Glycerol-3-phosphate dehydrogenase [NAD(P)+] (331 aa).

Positions 11 and 101 each coordinate NADPH. 3 residues coordinate sn-glycerol 3-phosphate: lysine 101, glycine 132, and serine 134. Alanine 136 is a binding site for NADPH. Sn-glycerol 3-phosphate-binding residues include lysine 188, aspartate 241, serine 251, arginine 252, and asparagine 253. Lysine 188 acts as the Proton acceptor in catalysis. Arginine 252 provides a ligand contact to NADPH. Residue glutamate 278 participates in NADPH binding.

The protein belongs to the NAD-dependent glycerol-3-phosphate dehydrogenase family.

Its subcellular location is the cytoplasm. It carries out the reaction sn-glycerol 3-phosphate + NAD(+) = dihydroxyacetone phosphate + NADH + H(+). It catalyses the reaction sn-glycerol 3-phosphate + NADP(+) = dihydroxyacetone phosphate + NADPH + H(+). It functions in the pathway membrane lipid metabolism; glycerophospholipid metabolism. Its function is as follows. Catalyzes the reduction of the glycolytic intermediate dihydroxyacetone phosphate (DHAP) to sn-glycerol 3-phosphate (G3P), the key precursor for phospholipid synthesis. The polypeptide is Glycerol-3-phosphate dehydrogenase [NAD(P)+] (Phytoplasma mali (strain AT)).